Consider the following 701-residue polypeptide: Polyribonucleotide nucleotidyltransferase (701 aa).

2 residues coordinate Mg(2+): D490 and D496. Residues 557–616 (PKVVTMSINPDKIRDVIGPGGKKINEIIDETGVKLDIEQDGTIFIGAVDQAMINRAKEII) form the KH domain. Positions 626 to 694 (GQVYHAKVKR…KQGRVNASHK (69 aa)) constitute an S1 motif domain.

The protein belongs to the polyribonucleotide nucleotidyltransferase family. It depends on Mg(2+) as a cofactor.

It is found in the cytoplasm. It carries out the reaction RNA(n+1) + phosphate = RNA(n) + a ribonucleoside 5'-diphosphate. In terms of biological role, involved in mRNA degradation. Catalyzes the phosphorolysis of single-stranded polyribonucleotides processively in the 3'- to 5'-direction. This Staphylococcus epidermidis (strain ATCC 12228 / FDA PCI 1200) protein is Polyribonucleotide nucleotidyltransferase.